Reading from the N-terminus, the 132-residue chain is Outer membrane protein assembly factor BamE (132 aa).

A signal peptide spans 1–16; sequence MQKLVLTLLVTSLLAG. Cysteine 17 is lipidated: N-palmitoyl cysteine. A lipid anchor (S-diacylglycerol cysteine) is attached at cysteine 17.

The protein belongs to the BamE family. Part of the Bam complex.

It localises to the cell outer membrane. Its function is as follows. Part of the outer membrane protein assembly complex, which is involved in assembly and insertion of beta-barrel proteins into the outer membrane. The protein is Outer membrane protein assembly factor BamE of Acinetobacter pittii (strain PHEA-2).